Consider the following 503-residue polypeptide: Probable DNA ligase (503 aa).

Asp212 lines the ATP pocket. The active-site N6-AMP-lysine intermediate is the Lys214. Residues Arg219, Arg234, Glu263, Phe296, Arg368, and Lys374 each coordinate ATP.

This sequence belongs to the ATP-dependent DNA ligase family. The cofactor is Mg(2+).

The enzyme catalyses ATP + (deoxyribonucleotide)n-3'-hydroxyl + 5'-phospho-(deoxyribonucleotide)m = (deoxyribonucleotide)n+m + AMP + diphosphate.. DNA ligase that seals nicks in double-stranded DNA during DNA replication, DNA recombination and DNA repair. The chain is Probable DNA ligase from Kineococcus radiotolerans (strain ATCC BAA-149 / DSM 14245 / SRS30216).